A 235-amino-acid chain; its full sequence is Sugar fermentation stimulation protein homolog (235 aa).

Belongs to the SfsA family.

The protein is Sugar fermentation stimulation protein homolog of Serratia proteamaculans (strain 568).